The chain runs to 236 residues: 3-oxoacyl-[acyl-carrier-protein] reductase (236 aa).

The residue at position 1 (M1) is an N-acetylmethionine. NADP(+) contacts are provided by residues 11 to 14 (SRGI) and 34 to 35 (RN). Position 40 is an N6-acetyllysine (K40). Residue 83–85 (AAG) participates in NADP(+) binding. N6-acetyllysine is present on K96. S134 provides a ligand contact to substrate. NADP(+) is bound by residues Y147, K151, and 180-182 (IHT). Y147 (proton acceptor) is an active-site residue. K194 is modified (N6-acetyllysine).

The protein belongs to the short-chain dehydrogenases/reductases (SDR) family. Homotetramer (in vitro). Heterotetramer with HSD17B8; contains two molecules each of HSD17B8 and CBR4. Does not form homotetramers when HSD17B8 is coexpressed, only heterotetramers (in vitro).

The protein localises to the mitochondrion matrix. The enzyme catalyses a (3R)-hydroxyacyl-[ACP] + NADP(+) = a 3-oxoacyl-[ACP] + NADPH + H(+). The catalysed reaction is a quinone + NADPH + H(+) = a quinol + NADP(+). It functions in the pathway lipid metabolism; fatty acid biosynthesis. Component of the heterotetramer complex KAR (3-ketoacyl-[acyl carrier protein] reductase or 3-ketoacyl-[ACP] reductase) that forms part of the mitochondrial fatty acid synthase (mtFAS). Beta-subunit of the KAR heterotetramer complex, responsible for the 3-ketoacyl-ACP reductase activity of the mtFAS, reduces 3-oxoacyl-[ACP] to (3R)-hydroxyacyl-[ACP] in a NADPH-dependent manner with no chain length preference, thereby participating in mitochondrial fatty acid biosynthesis. The homotetramer has NADPH-dependent quinone reductase activity (in vitro), hence could play a role in protection against cytotoxicity of exogenous quinones. As a heterotetramer, it can also reduce 9,10-phenanthrenequinone, 1,4-benzoquinone and various other o-quinones and p-quinones (in vitro). This Rattus norvegicus (Rat) protein is 3-oxoacyl-[acyl-carrier-protein] reductase (Cbr4).